The following is a 420-amino-acid chain: Enolase (420 aa).

Gln-162 contributes to the (2R)-2-phosphoglycerate binding site. Glu-206 acts as the Proton donor in catalysis. Mg(2+) contacts are provided by Asp-241, Glu-282, and Asp-308. Lys-333, Arg-362, Ser-363, and Lys-384 together coordinate (2R)-2-phosphoglycerate. Lys-333 acts as the Proton acceptor in catalysis.

Belongs to the enolase family. Mg(2+) serves as cofactor.

The protein localises to the cytoplasm. It is found in the secreted. It localises to the cell surface. The catalysed reaction is (2R)-2-phosphoglycerate = phosphoenolpyruvate + H2O. The protein operates within carbohydrate degradation; glycolysis; pyruvate from D-glyceraldehyde 3-phosphate: step 4/5. Its function is as follows. Catalyzes the reversible conversion of 2-phosphoglycerate (2-PG) into phosphoenolpyruvate (PEP). It is essential for the degradation of carbohydrates via glycolysis. This Methanothrix thermoacetophila (strain DSM 6194 / JCM 14653 / NBRC 101360 / PT) (Methanosaeta thermophila) protein is Enolase.